The primary structure comprises 218 residues: Small ribosomal subunit protein uS3c (218 aa).

The KH type-2 domain occupies 47–117 (VRTHIRNSSN…KLKITLSEID (71 aa)).

This sequence belongs to the universal ribosomal protein uS3 family. As to quaternary structure, part of the 30S ribosomal subunit.

The protein resides in the plastid. Its subcellular location is the chloroplast. In Spirogyra maxima (Green alga), this protein is Small ribosomal subunit protein uS3c (rps3).